A 308-amino-acid polypeptide reads, in one-letter code: NAD kinase (308 aa).

Asp-86 functions as the Proton acceptor in the catalytic mechanism. Residues 86 to 87 (DG), Arg-91, 160 to 161 (NE), Asp-190, and 201 to 206 (TAYAFS) contribute to the NAD(+) site.

Belongs to the NAD kinase family. A divalent metal cation serves as cofactor.

The protein localises to the cytoplasm. It catalyses the reaction NAD(+) + ATP = ADP + NADP(+) + H(+). Involved in the regulation of the intracellular balance of NAD and NADP, and is a key enzyme in the biosynthesis of NADP. Catalyzes specifically the phosphorylation on 2'-hydroxyl of the adenosine moiety of NAD to yield NADP. The sequence is that of NAD kinase from Mycolicibacterium paratuberculosis (strain ATCC BAA-968 / K-10) (Mycobacterium paratuberculosis).